Consider the following 425-residue polypeptide: Proline--tRNA ligase (425 aa).

The protein belongs to the class-II aminoacyl-tRNA synthetase family. ProS type 2 subfamily. In terms of assembly, homodimer.

It is found in the cytoplasm. The catalysed reaction is tRNA(Pro) + L-proline + ATP = L-prolyl-tRNA(Pro) + AMP + diphosphate. In terms of biological role, catalyzes the attachment of proline to tRNA(Pro) in a two-step reaction: proline is first activated by ATP to form Pro-AMP and then transferred to the acceptor end of tRNA(Pro). In Anaplasma marginale (strain St. Maries), this protein is Proline--tRNA ligase.